The sequence spans 131 residues: MKKTKVINSDLSRVIATMGHFDKLSIGDAGMPVPSSTEKIDLAVDNGIPSFMQVLNNVLEELEVQRIYLAEEIKVQNPKMLTAIKKRLPDTPITFIPHEEMKKDLADCKAFVRTGEMTPYSNILLESGVTF.

Catalysis depends on histidine 20, which acts as the Proton donor. Substrate is bound by residues aspartate 28, histidine 98, and 120 to 122 (YSN).

The protein belongs to the RbsD / FucU family. RbsD subfamily. As to quaternary structure, homodecamer.

The protein resides in the cytoplasm. The catalysed reaction is beta-D-ribopyranose = beta-D-ribofuranose. The protein operates within carbohydrate metabolism; D-ribose degradation; D-ribose 5-phosphate from beta-D-ribopyranose: step 1/2. Catalyzes the interconversion of beta-pyran and beta-furan forms of D-ribose. The protein is D-ribose pyranase of Lactiplantibacillus plantarum (strain ATCC BAA-793 / NCIMB 8826 / WCFS1) (Lactobacillus plantarum).